Here is a 226-residue protein sequence, read N- to C-terminus: ATP synthase F(0) complex subunit a (226 aa).

6 helical membrane passes run 6–26, 68–88, 97–117, 138–158, 164–184, and 189–209; these read FASFITPVILGLPLVTLIVLF, WALMLMSLILFIGSTNLLGLL, QLSMNLGMAIPLWAGAVITGF, IPMLVIIETISLFIQPVALAV, ITAGHLLIHLIGGATLALMSI, and ALITFTILILLTILEFAVAMI.

The protein belongs to the ATPase A chain family. Component of the ATP synthase complex composed at least of ATP5F1A/subunit alpha, ATP5F1B/subunit beta, ATP5MC1/subunit c (homooctomer), MT-ATP6/subunit a, MT-ATP8/subunit 8, ATP5ME/subunit e, ATP5MF/subunit f, ATP5MG/subunit g, ATP5MK/subunit k, ATP5MJ/subunit j, ATP5F1C/subunit gamma, ATP5F1D/subunit delta, ATP5F1E/subunit epsilon, ATP5PF/subunit F6, ATP5PB/subunit b, ATP5PD/subunit d, ATP5PO/subunit OSCP. ATP synthase complex consists of a soluble F(1) head domain (subunits alpha(3) and beta(3)) - the catalytic core - and a membrane F(0) domain - the membrane proton channel (subunits c, a, 8, e, f, g, k and j). These two domains are linked by a central stalk (subunits gamma, delta, and epsilon) rotating inside the F1 region and a stationary peripheral stalk (subunits F6, b, d, and OSCP). Interacts with DNAJC30; interaction is direct.

The protein resides in the mitochondrion inner membrane. It catalyses the reaction H(+)(in) = H(+)(out). Its function is as follows. Subunit a, of the mitochondrial membrane ATP synthase complex (F(1)F(0) ATP synthase or Complex V) that produces ATP from ADP in the presence of a proton gradient across the membrane which is generated by electron transport complexes of the respiratory chain. ATP synthase complex consist of a soluble F(1) head domain - the catalytic core - and a membrane F(1) domain - the membrane proton channel. These two domains are linked by a central stalk rotating inside the F(1) region and a stationary peripheral stalk. During catalysis, ATP synthesis in the catalytic domain of F(1) is coupled via a rotary mechanism of the central stalk subunits to proton translocation. With the subunit c (ATP5MC1), forms the proton-conducting channel in the F(0) domain, that contains two crucial half-channels (inlet and outlet) that facilitate proton movement from the mitochondrial intermembrane space (IMS) into the matrix. Protons are taken up via the inlet half-channel and released through the outlet half-channel, following a Grotthuss mechanism. The polypeptide is ATP synthase F(0) complex subunit a (Bos indicus (Zebu)).